An 87-amino-acid chain; its full sequence is Large ribosomal subunit protein bL31B (87 aa).

Belongs to the bacterial ribosomal protein bL31 family. Type B subfamily. Part of the 50S ribosomal subunit.

This Ralstonia nicotianae (strain ATCC BAA-1114 / GMI1000) (Ralstonia solanacearum) protein is Large ribosomal subunit protein bL31B.